A 168-amino-acid polypeptide reads, in one-letter code: Putative B3 domain-containing protein Os10g0158600 (168 aa).

Positions 4–97 (VVFASARLNA…KARVMLLNRQ (94 aa)) form a DNA-binding region, TF-B3. The interval 105–151 (KTPSTTSSDKNRSLSPSDQLTRASTSAHPSTSKSIPPLRNGTGSTKR) is disordered. Polar residues predominate over residues 106 to 138 (TPSTTSSDKNRSLSPSDQLTRASTSAHPSTSKS).

The protein resides in the nucleus. The chain is Putative B3 domain-containing protein Os10g0158600 from Oryza sativa subsp. japonica (Rice).